A 268-amino-acid chain; its full sequence is F-actin-capping protein subunit alpha (268 aa).

Position 2 is an N-acetylserine (Ser2). At Ser17 the chain carries Phosphoserine.

Belongs to the F-actin-capping protein alpha subunit family. In terms of assembly, component of the F-actin capping complex, composed of a heterodimer of an alpha and a beta subunit. Interacts with BSP1 (via C-terminus); leading to recruitment of the F-actin capping complex to actin cortical patches and the acomyosin contractile ring.

The protein resides in the cytoplasm. It localises to the cytoskeleton. Its subcellular location is the actin patch. F-actin-capping proteins bind in a Ca(2+)-independent manner to the fast growing ends of actin filaments (barbed end) thereby blocking the exchange of subunits at these ends. Unlike other capping proteins (such as gelsolin and severin), these proteins do not sever actin filaments. In Saccharomyces cerevisiae (strain ATCC 204508 / S288c) (Baker's yeast), this protein is F-actin-capping protein subunit alpha (CAP1).